A 407-amino-acid polypeptide reads, in one-letter code: Serine/threonine transporter SstT (407 aa).

The next 9 membrane-spanning stretches (helical) occupy residues 10–30 (AKGN…LIGI), 42–62 (LGIL…FILI), 81–101 (IIIL…LANF), 141–161 (ALSS…GAAL), 179–199 (VLKI…GLVA), 218–238 (ILLV…IVFF), 245–267 (FPLI…SSAA), 288–308 (ISIP…IAIL), and 316–336 (VGIE…TFAA).

This sequence belongs to the dicarboxylate/amino acid:cation symporter (DAACS) (TC 2.A.23) family.

The protein resides in the cell inner membrane. It carries out the reaction L-serine(in) + Na(+)(in) = L-serine(out) + Na(+)(out). The catalysed reaction is L-threonine(in) + Na(+)(in) = L-threonine(out) + Na(+)(out). Functionally, involved in the import of serine and threonine into the cell, with the concomitant import of sodium (symport system). This is Serine/threonine transporter SstT from Campylobacter jejuni subsp. doylei (strain ATCC BAA-1458 / RM4099 / 269.97).